Consider the following 318-residue polypeptide: Strigolactone esterase D14 (318 aa).

Residues 1–11 (MLRSTHPPPSS) show a composition bias toward pro residues. The segment at 1–48 (MLRSTHPPPSSPSSSSSGGGGGGGSSASSSSEKTMVGGGGGGGGGSGS) is disordered. Residues 36 to 47 (VGGGGGGGGGSG) are compositionally biased toward gly residues. The active-site Nucleophile is serine 147. The substrate site is built by serine 147 and cysteine 241. Active-site residues include aspartate 268 and histidine 297. Histidine 297 serves as a coordination point for substrate.

This sequence belongs to the AB hydrolase superfamily. In terms of assembly, interacts with D53. The interaction between D53 and D14 is enhanced in the presence of strigolactones. The interaction with D53 occurs in the presence of (2'R) stereoisomers of strigolactones, but not (2'S) stereoisomers. Interacts with SLR1 in a strigolactone-dependent manner. Interacts with D3 in a strigolactone-dependent manner. Expressed in the parenchyma cells of the root stele and lateral roots, vascular tissues of vein and leaf sheath, ligule base, auricle base and stem base.

It is found in the cytoplasm. Its subcellular location is the nucleus. In terms of biological role, involved in strigolactone (SL) signaling pathway. May function downstream of SL synthesis, as a component of hormone signaling or as an enzyme that participates in the conversion of SL to the bioactive form. Strigolactones are hormones that inhibit tillering and shoot branching through the MAX-dependent pathway, contribute to the regulation of shoot architectural response to phosphate-limiting conditions and function as rhizosphere signal that stimulates hyphal branching of arbuscular mycorrhizal fungi and trigger seed germination of root parasitic weeds. Strigolactone-dependent association of D14 with D3 and D53 (a repressor of SL signaling) triggers D53 ubiquitination and degradation. Hydrolyzes the butenolide ring of SLs. A reaction product D-OH is trapped in the cavity of D14, inducing the interaction with SLR1, and probably with other proteins such as D3 and D53. Contributes to the negative regulation of gibberellin signaling. This Oryza sativa subsp. japonica (Rice) protein is Strigolactone esterase D14.